Reading from the N-terminus, the 229-residue chain is Sugar fermentation stimulation protein homolog (229 aa).

The protein belongs to the SfsA family.

This chain is Sugar fermentation stimulation protein homolog, found in Carboxydothermus hydrogenoformans (strain ATCC BAA-161 / DSM 6008 / Z-2901).